The sequence spans 637 residues: 3D-(3,5/4)-trihydroxycyclohexane-1,2-dione hydrolase (637 aa).

Glutamate 66 lines the thiamine diphosphate pocket. A thiamine pyrophosphate binding region spans residues 442-522 (SLPGDLQRLW…INVLLFDNSG (81 aa)). Positions 493 and 520 each coordinate Mg(2+).

It belongs to the TPP enzyme family. Mg(2+) is required as a cofactor. It depends on thiamine diphosphate as a cofactor.

It catalyses the reaction 3D-3,5/4-trihydroxycyclohexane-1,2-dione + H2O = 5-deoxy-D-glucuronate + H(+). The protein operates within polyol metabolism; myo-inositol degradation into acetyl-CoA; acetyl-CoA from myo-inositol: step 3/7. Involved in the cleavage of the C1-C2 bond of 3D-(3,5/4)-trihydroxycyclohexane-1,2-dione (THcHDO) to yield 5-deoxy-glucuronate (5DG). The protein is 3D-(3,5/4)-trihydroxycyclohexane-1,2-dione hydrolase (iolD) of Bacillus subtilis (strain 168).